A 95-amino-acid polypeptide reads, in one-letter code: Protein Vpr (95 aa).

The homooligomerization stretch occupies residues 1-42; it reads MERAPEDAGPQREPYNEWALELLEELKNEAVRHFPRIWLHGL. 3 positions are modified to phosphoserine; by host: serine 79, serine 93, and serine 95.

It belongs to the HIV-1 VPR protein family. As to quaternary structure, homooligomer, may form homodimer. Interacts with p6-gag region of the Pr55 Gag precursor protein through a (Leu-X-X)4 motif near the C-terminus of the P6gag protein. Interacts with host UNG. May interact with host RAD23A/HHR23A. Interacts with host VPRBP/DCAF1, leading to hijack the CUL4A-RBX1-DDB1-DCAF1/VPRBP complex, mediating ubiquitination of host proteins such as TERT and ZGPAT and arrest of the cell cycle in G2 phase. Post-translationally, phosphorylated on several residues by host. These phosphorylations regulate VPR activity for the nuclear import of the HIV-1 pre-integration complex.

It is found in the virion. It localises to the host nucleus. Its subcellular location is the host extracellular space. Its function is as follows. During virus replication, may deplete host UNG protein, and incude G2-M cell cycle arrest. Acts by targeting specific host proteins for degradation by the 26S proteasome, through association with the cellular CUL4A-DDB1 E3 ligase complex by direct interaction with host VPRPB/DCAF-1. Cell cycle arrest reportedly occurs within hours of infection and is not blocked by antiviral agents, suggesting that it is initiated by the VPR carried into the virion. Additionally, VPR induces apoptosis in a cell cycle dependent manner suggesting that these two effects are mechanistically linked. Detected in the serum and cerebrospinal fluid of AIDS patient, VPR may also induce cell death to bystander cells. In terms of biological role, during virus entry, plays a role in the transport of the viral pre-integration (PIC) complex to the host nucleus. This function is crucial for viral infection of non-dividing macrophages. May act directly at the nuclear pore complex, by binding nucleoporins phenylalanine-glycine (FG)-repeat regions. The sequence is that of Protein Vpr from Homo sapiens (Human).